The sequence spans 370 residues: MAPRPLRRHPPLHHSFHESRRDPVADKHRINFEPVDIEMEVGEDEYILDAAFRQGIHLMHGCREGRCSACKSFVLEGDIQMEDYSTFACNDAEVDEGHVLLCRSTAYSDCTIELLNFDEDELLGGVPIQDVRTRVTRIEPMTKDIVSLRLAPVEPAGYEFKPGQYSDLHIPGTEEHRSFSMATTRSTPGHVEFLIKKYPGGKFAGLLEDGISVGDEIALTGPYGSFTIKEGHVLPMVFIGGGAGMAPLLSLLRHMSETGNTRQVHFYYGARTPQDLFYVDEILELGRGLTDFTFVACLSESMDPPPVGAIAVEDGNVTDVVGRREPDIGRAEVYLCGPPPMVDAALELLEANGTPKDQIFYDKFTSPAFE.

The span at 1-14 (MAPRPLRRHPPLHH) shows a compositional bias: basic residues. The disordered stretch occupies residues 1-21 (MAPRPLRRHPPLHHSFHESRR). Residues 28–118 (HRINFEPVDI…DCTIELLNFD (91 aa)) form the 2Fe-2S ferredoxin-type domain. [2Fe-2S] cluster contacts are provided by Cys62, Cys67, Cys70, and Cys102. One can recognise an FAD-binding FR-type domain in the interval 128-229 (IQDVRTRVTR…TGPYGSFTIK (102 aa)).

It belongs to the TmoA/XamoA family. As to quaternary structure, the propane 2-monooxygenase multicomponent enzyme system is composed of an electron transfer component and a monooxygenase component interacting with the effector protein PrmD. The electron transfer component is composed of a reductase (PrmB), and the monooxygenase component is formed by a large subunit (PrmA) and a small subunit (PrmC). Requires FAD as cofactor. [2Fe-2S] cluster is required as a cofactor.

Functionally, reductase component of the propane 2-monooxygenase multicomponent enzyme system which is involved in the degradation of propane via the O2-dependent hydroxylation of propane. Reductase catalyzes the transfer of electrons from NADH or NADPH to monooxygenase. The chain is Propane 2-monooxygenase, reductase component from Rhodococcus jostii (strain RHA1).